We begin with the raw amino-acid sequence, 333 residues long: MMEQWLESTPGWSNIALFFGLGALLLAVVLAFVTYGILAERKVMGFMQGRIGPNQVGGRFGLLQTVADVLKLLLKEDTIPKAADRPLYVLAPIIAFVPSFMVLAVLPFTDAFRFADIGVGLLYYIAVSGLTTVGVVAGGWASNNKYALLGGMRAAAQMISYEIPLVMSALGVVLLAGSMNLVDIVAAQKDVWFIFAQPLAFLIFLIAAVAELNRTPFDLPEAESELVAGFHVEYSGFRWAFFMLAEYVYLFAMAALVTILFLGGWHPVAFLGWIPGAVWFALKFCAVVFVLIWFRATFPRVRADQLMEFAWKVLLPLSLVNIVLTAVVKAWFF.

The next 8 membrane-spanning stretches (helical) occupy residues 15-35, 88-108, 117-137, 165-185, 191-211, 241-261, 274-294, and 313-333; these read IALF…FVTY, YVLA…VLPF, IGVG…GVVA, LVMS…VDIV, VWFI…AVAE, FFML…TILF, IPGA…LIWF, and VLLP…AWFF.

Belongs to the complex I subunit 1 family. As to quaternary structure, NDH-1 is composed of 14 different subunits. Subunits NuoA, H, J, K, L, M, N constitute the membrane sector of the complex.

The protein resides in the cell membrane. The catalysed reaction is a quinone + NADH + 5 H(+)(in) = a quinol + NAD(+) + 4 H(+)(out). In terms of biological role, NDH-1 shuttles electrons from NADH, via FMN and iron-sulfur (Fe-S) centers, to quinones in the respiratory chain. The immediate electron acceptor for the enzyme in this species is believed to be ubiquinone. Couples the redox reaction to proton translocation (for every two electrons transferred, four hydrogen ions are translocated across the cytoplasmic membrane), and thus conserves the redox energy in a proton gradient. This subunit may bind ubiquinone. This Geobacillus kaustophilus (strain HTA426) protein is NADH-quinone oxidoreductase subunit H.